Reading from the N-terminus, the 164-residue chain is UPF0304 protein YfbU (164 aa).

Belongs to the UPF0304 family.

The sequence is that of UPF0304 protein YfbU from Salmonella choleraesuis (strain SC-B67).